The sequence spans 175 residues: Phytochrome-interacting ankyrin-repeat protein 1 (175 aa).

3 ANK repeats span residues 30 to 59 (RGWT…DVNA), 67 to 96 (KGMT…NMEA), and 102 to 131 (CGWT…FLPD).

In terms of assembly, interacts with phytochrome A (PHYA), both in Pr and Pfr forms.

It is found in the cytoplasm. The protein resides in the nucleus. The protein localises to the mitochondrion. This chain is Phytochrome-interacting ankyrin-repeat protein 1, found in Arabidopsis thaliana (Mouse-ear cress).